The primary structure comprises 823 residues: Trimethylamine-N-oxide reductase (823 aa).

The segment at residues 1 to 32 (MKQSRRQFLKNMSAMAATFAMPNFLIAQNAFA) is a signal peptide (tat-type signal). A Mo-bis(molybdopterin guanine dinucleotide)-binding site is contributed by serine 181.

It belongs to the prokaryotic molybdopterin-containing oxidoreductase family. Requires Mo-bis(molybdopterin guanine dinucleotide) as cofactor. Post-translationally, predicted to be exported by the Tat system. The position of the signal peptide cleavage has not been experimentally proven.

It localises to the periplasm. It carries out the reaction trimethylamine + 2 Fe(III)-[cytochrome c] + H2O = trimethylamine N-oxide + 2 Fe(II)-[cytochrome c] + 3 H(+). Reduces trimethylamine-N-oxide (TMAO) into trimethylamine; an anaerobic reaction coupled to energy-yielding reactions. In Pasteurella multocida (strain Pm70), this protein is Trimethylamine-N-oxide reductase (torA).